Consider the following 919-residue polypeptide: Sarcosine dehydrogenase, mitochondrial (919 aa).

Residues 1 to 22 (MASLSRVLRVAATCPRGRAAWN) constitute a mitochondrion transit peptide. Lysine 38 is modified (N6-succinyllysine). Histidine 109 carries the tele-8alpha-FAD histidine modification. Lysine 174 is modified (N6-acetyllysine; alternate). Lysine 174 bears the N6-succinyllysine; alternate mark. Residues lysine 278, lysine 378, lysine 392, and lysine 535 each carry the N6-succinyllysine modification. N6-acetyllysine is present on residues lysine 560 and lysine 776. Residue tyrosine 778 is modified to Phosphotyrosine. N6-acetyllysine; alternate occurs at positions 803, 885, and 905. An N6-succinyllysine; alternate mark is found at lysine 803, lysine 885, and lysine 905.

It belongs to the GcvT family. Requires FAD as cofactor.

Its subcellular location is the mitochondrion matrix. The enzyme catalyses (6S)-5,6,7,8-tetrahydrofolyl-(gamma-L-Glu)(n) + sarcosine + oxidized [electron-transfer flavoprotein] + H(+) = (6R)-5,10-methylenetetrahydrofolyl-(gamma-L-Glu)(n) + reduced [electron-transfer flavoprotein] + glycine. It participates in amine and polyamine degradation; sarcosine degradation; formaldehyde and glycine from sarcosine: step 1/1. Its function is as follows. Catalyzes the last step of the oxidative degradation of choline to glycine. Converts sarcosine into glycine. The sequence is that of Sarcosine dehydrogenase, mitochondrial from Mus musculus (Mouse).